A 174-amino-acid polypeptide reads, in one-letter code: Repair DNA polymerase X (174 aa).

The segment at 42 to 51 (REEKMLNDVD) is involved in ssDNA binding. Residues D49 and D51 each contribute to the Mg(2+) site. Residues C81 and C86 are joined by a disulfide bond. D100 is a Mg(2+) binding site.

The protein belongs to the DNA polymerase type-X family. It depends on Mg(2+) as a cofactor.

The protein resides in the virion. It catalyses the reaction DNA(n) + a 2'-deoxyribonucleoside 5'-triphosphate = DNA(n+1) + diphosphate. Its function is as follows. Error-prone polymerase lacking a proofreading 3'-5' exonuclease which catalyzes the gap-filling reaction during the DNA repair process. Specifically binds intermediates in the single-nucleotide base-excision repair process. Also catalyzes DNA polymerization with low nucleotide-insertion fidelity. Probably acts as a strategic DNA mutase, which gives rise to a rapid emergence of variants. Generates mismatched G-G pairs, in that case, the polymerase first binds the deoxynucleotide followed by mismatch formation. Together with the viral DNA ligase, fills the single nucleotide gaps generated by the AP endonuclease. Binds DNA with high affinity via the helix alphaE. This African swine fever virus (isolate Tick/Malawi/Lil 20-1/1983) (ASFV) protein is Repair DNA polymerase X.